The sequence spans 127 residues: Fluoride-specific ion channel FluC (127 aa).

Transmembrane regions (helical) follow at residues 37-57 (TSFVNIAGSLAMGLLAGWLAL), 68-88 (LFLATGVLGGFTTFSAFSLEV), and 102-122 (LYAGVSVLLGVSALFIGLWMA). The Na(+) site is built by G76 and T79.

The protein belongs to the fluoride channel Fluc/FEX (TC 1.A.43) family.

It is found in the cell inner membrane. The catalysed reaction is fluoride(in) = fluoride(out). Its activity is regulated as follows. Na(+) is not transported, but it plays an essential structural role and its presence is essential for fluoride channel function. Its function is as follows. Fluoride-specific ion channel. Important for reducing fluoride concentration in the cell, thus reducing its toxicity. This chain is Fluoride-specific ion channel FluC, found in Hyphomonas neptunium (strain ATCC 15444).